Reading from the N-terminus, the 337-residue chain is Casein kinase II subunit alpha (337 aa).

The Protein kinase domain maps to 47–332; it reads YEIIRKIGRG…TREAMEHPYF (286 aa). Residues 53–61 and lysine 76 contribute to the ATP site; that span reads IGRGKYSEV. Catalysis depends on aspartate 164, which acts as the Proton acceptor.

It belongs to the protein kinase superfamily. CMGC Ser/Thr protein kinase family. CK2 subfamily. Tetramer of two alpha and two beta chains.

It carries out the reaction L-seryl-[protein] + ATP = O-phospho-L-seryl-[protein] + ADP + H(+). The enzyme catalyses L-threonyl-[protein] + ATP = O-phospho-L-threonyl-[protein] + ADP + H(+). In terms of biological role, casein kinases are operationally defined by their preferential utilization of acidic proteins such as caseins as substrates. The alpha chain contains the catalytic site. The protein is Casein kinase II subunit alpha (casK) of Dictyostelium discoideum (Social amoeba).